The chain runs to 120 residues: Seminal plasma protein HSP-1 (120 aa).

2 consecutive repeat copies span residues 1–13 (DLQTTGADHSATV) and 16–28 (DQQLIMTKHSATV). The tract at residues 1–28 (DLQTTGADHSATVNPDQQLIMTKHSATV) is 2 X approximate repeats. O-linked (GalNAc...) threonine glycans are attached at residues Thr5, Thr12, Thr22, and Thr27. 2 consecutive Fibronectin type-II domains span residues 29 to 73 (TPEN…YCAA) and 74 to 120 (TDYA…WKYC). Cystine bridges form between Cys34/Cys58, Cys48/Cys71, Cys79/Cys105, and Cys93/Cys120.

The protein belongs to the seminal plasma protein family. In terms of assembly, one glycoform exists as a monomer while the other forms a heterotetramer with HSP-2 and binds heparin. O-glycosylated on Thr. There are two forms of HSP-1 which probably differ in the amount of sialylation of polysaccharide. As to expression, major component of seminal plasma.

The protein localises to the secreted. In terms of biological role, could enhance the fertilizing capacity of spermatozoa upon interaction with heparin-like glycosaminoglycans present in the female genital tract. In Equus caballus (Horse), this protein is Seminal plasma protein HSP-1.